The following is a 538-amino-acid chain: Carboxypeptidase 2 (538 aa).

Residues 1-21 (MVAYRFLTLISLGLGSHCASA) form the signal peptide. Asn46 carries N-linked (GlcNAc...) asparagine glycosylation. Residues 53–76 (PAFTSPGTVPRGFSDGTSGPTRDE) form a disordered region. Residues 71–351 (GPTRDETMEG…VMVKSILQTA (281 aa)) form the Peptidase M14 domain. Residues His136, Glu139, and His224 each contribute to the Zn(2+) site. Catalysis depends on Glu322, which acts as the Proton donor/acceptor. Residues Asn393 and Asn459 are each glycosylated (N-linked (GlcNAc...) asparagine).

This sequence belongs to the peptidase M14 family. Requires Zn(2+) as cofactor.

The protein resides in the secreted. In terms of biological role, extracellular metalloprotease that contributes to pathogenicity. This is Carboxypeptidase 2 (MCPB) from Trichophyton tonsurans (Scalp ringworm fungus).